Reading from the N-terminus, the 529-residue chain is Structure-specific endonuclease subunit SLX1 homolog 1 (529 aa).

Residues 4-89 enclose the GIY-YIG domain; that stretch reads RFHCVYLLTS…PTKSTRLKTQ (86 aa). The segment at 231–364 adopts an SLX1-type zinc-finger fold; that stretch reads CALCSLPLRS…PCQPCPCPLC (134 aa). 3 disordered regions span residues 275-305, 409-437, and 470-501; these read VTMG…MDAH, NSSL…YCGD, and SVSL…RMTD. Over residues 282 to 297 the composition is skewed to basic and acidic residues; it reads RNERSGEYSNKIKDDS.

This sequence belongs to the SLX1 family. In terms of assembly, forms a heterodimer with a member of the SLX4 family. A divalent metal cation is required as a cofactor.

It is found in the nucleus. Functionally, catalytic subunit of a heterodimeric structure-specific endonuclease that resolves DNA secondary structures generated during DNA repair and recombination. Has endonuclease activity towards branched DNA substrates, introducing single-strand cuts in duplex DNA close to junctions with ss-DNA. In Trypanosoma cruzi (strain CL Brener), this protein is Structure-specific endonuclease subunit SLX1 homolog 1.